A 185-amino-acid chain; its full sequence is UPF0200 protein TK1334 (185 aa).

7 to 14 (GMPGSGKS) contributes to the ATP binding site.

Belongs to the UPF0200 family.

In Thermococcus kodakarensis (strain ATCC BAA-918 / JCM 12380 / KOD1) (Pyrococcus kodakaraensis (strain KOD1)), this protein is UPF0200 protein TK1334.